We begin with the raw amino-acid sequence, 179 residues long: Large ribosomal subunit protein uL6 (179 aa).

Residues 151–179 are disordered; that stretch reads RKPEPYKGKGIKYDNEQIRRKAGKSGGKK. Residues 152-169 show a composition bias toward basic and acidic residues; the sequence is KPEPYKGKGIKYDNEQIR. Residues 170 to 179 show a composition bias toward basic residues; the sequence is RKAGKSGGKK.

Belongs to the universal ribosomal protein uL6 family. As to quaternary structure, part of the 50S ribosomal subunit.

Functionally, this protein binds to the 23S rRNA, and is important in its secondary structure. It is located near the subunit interface in the base of the L7/L12 stalk, and near the tRNA binding site of the peptidyltransferase center. The chain is Large ribosomal subunit protein uL6 from Nitratidesulfovibrio vulgaris (strain ATCC 29579 / DSM 644 / CCUG 34227 / NCIMB 8303 / VKM B-1760 / Hildenborough) (Desulfovibrio vulgaris).